Consider the following 86-residue polypeptide: Large ribosomal subunit protein bL27 (86 aa).

The interval 1–21 (MAHHKGGGSSRNGKDSNPQYL) is disordered.

The protein belongs to the bacterial ribosomal protein bL27 family.

The chain is Large ribosomal subunit protein bL27 from Coprothermobacter proteolyticus (strain ATCC 35245 / DSM 5265 / OCM 4 / BT).